The following is a 380-amino-acid chain: MANLRKTHPLIKIMNDALVDLPAPSNISVWWNFGSLLGLCLITQILTGLFLAMHYTSDISTAFSSVAHICRDVNYGWLIRNLHANGASFFFICMYLHVARGLYYGSYAYKETWNIGVILLLLVMMTAFVGYVLPWGQMSFWGATVITNLLSAVPYVGDALVQWIWGGFSVDNATLTRFFAFHFILPFIVAAAVILHLLFLHETGSNNPMGLNSDTDKVYFHPYFSYKDILGFIVMLLALITLALFSPNLLGDPENFTPANPLVTPPHIKPEWYFLFAYAILRSIPNKLGGVLALLFSILVLMIVPILHTSKMQTLTFRPFSQFLFWVLVADMLILTWIGGMPVELPFIIIGQIASILYFTLFLLLIPMAGLMENKMLSLK.

The next 4 membrane-spanning stretches (helical) occupy residues 33 to 53, 77 to 98, 113 to 133, and 178 to 198; these read FGSLLGLCLITQILTGLFLAM, WLIRNLHANGASFFFICMYLHV, WNIGVILLLLVMMTAFVGYVL, and FFAFHFILPFIVAAAVILHLL. Positions 83 and 97 each coordinate heme b. Residues His182 and His196 each coordinate heme b. An a ubiquinone-binding site is contributed by His201. The next 4 helical transmembrane spans lie at 226–246, 288–308, 320–340, and 347–367; these read YKDILGFIVMLLALITLALFS, LGGVLALLFSILVLMIVPILH, FSQFLFWVLVADMLILTWIGG, and FIIIGQIASILYFTLFLLLIP.

The protein belongs to the cytochrome b family. In terms of assembly, the cytochrome bc1 complex contains 3 respiratory subunits (MT-CYB, CYC1 and UQCRFS1), 2 core proteins (UQCRC1 and UQCRC2) and probably 6 low-molecular weight proteins. The cofactor is heme b.

The protein resides in the mitochondrion inner membrane. Functionally, component of the ubiquinol-cytochrome c reductase complex (complex III or cytochrome b-c1 complex) that is part of the mitochondrial respiratory chain. The b-c1 complex mediates electron transfer from ubiquinol to cytochrome c. Contributes to the generation of a proton gradient across the mitochondrial membrane that is then used for ATP synthesis. The sequence is that of Cytochrome b (mt-cyb) from Arapaima gigas (Arapaima).